The chain runs to 192 residues: 3-hydroxyanthranilate 3,4-dioxygenase 1 (192 aa).

Residue R50 coordinates O2. Residues H54, E60, and H102 each contribute to the Fe cation site. A substrate-binding site is contributed by E60. Residues R106 and E116 each coordinate substrate. A divalent metal cation is bound by residues C131, C134, C168, and C171.

It belongs to the 3-HAO family. Requires Fe(2+) as cofactor.

It localises to the cytoplasm. The catalysed reaction is 3-hydroxyanthranilate + O2 = (2Z,4Z)-2-amino-3-carboxymuconate 6-semialdehyde. It participates in cofactor biosynthesis; NAD(+) biosynthesis; quinolinate from L-kynurenine: step 3/3. Functionally, catalyzes the oxidative ring opening of 3-hydroxyanthranilate to 2-amino-3-carboxymuconate semialdehyde, which spontaneously cyclizes to quinolinate. The sequence is that of 3-hydroxyanthranilate 3,4-dioxygenase 1 (bna1-1) from Aspergillus oryzae (strain ATCC 42149 / RIB 40) (Yellow koji mold).